The chain runs to 469 residues: Cysteine protease ATG4D (469 aa).

Over residues 1-29 (MNSVSPLATQYGSPKGSQQMENRSTQSGG) the composition is skewed to polar residues. The disordered stretch occupies residues 1 to 41 (MNSVSPLATQYGSPKGSQQMENRSTQSGGHEQRKMGHQDAT). The active-site Nucleophile is the cysteine 131. Residues 169–191 (IRSSSPPSMPLSSLATGHSAGDY) are disordered. Low complexity predominate over residues 171–182 (SSSPPSMPLSSL). Catalysis depends on residues aspartate 356 and histidine 358. The segment at 436 to 469 (QEYAEGPQSSSHPPVCRKKGPLVKRPSSDEFEFL) is disordered.

This sequence belongs to the peptidase C54 family.

It localises to the cytoplasm. The catalysed reaction is [protein]-C-terminal L-amino acid-glycyl-phosphatidylethanolamide + H2O = [protein]-C-terminal L-amino acid-glycine + a 1,2-diacyl-sn-glycero-3-phosphoethanolamine. It catalyses the reaction [protein]-C-terminal L-amino acid-glycyl-phosphatidylserine + H2O = [protein]-C-terminal L-amino acid-glycine + a 1,2-diacyl-sn-glycero-3-phospho-L-serine. Functionally, cysteine protease that plays a key role in autophagy by mediating both proteolytic activation and delipidation of ATG8 family proteins. The protease activity is required for proteolytic activation of ATG8 family proteins to reveal a C-terminal glycine. Exposure of the glycine at the C-terminus is essential for ATG8 proteins conjugation to phosphatidylethanolamine (PE) and insertion to membranes, which is necessary for autophagy. In addition to the protease activity, also mediates delipidation of ATG8 family proteins. Catalyzes delipidation of PE-conjugated forms of ATG8 proteins during macroautophagy. Also involved in non-canonical autophagy, a parallel pathway involving conjugation of ATG8 proteins to single membranes at endolysosomal compartments, by catalyzing delipidation of ATG8 proteins conjugated to phosphatidylserine (PS). The protein is Cysteine protease ATG4D of Xenopus laevis (African clawed frog).